The primary structure comprises 56 residues: Small ribosomal subunit protein uS14 (56 aa).

The Zn(2+) site is built by Cys-21, Cys-24, Cys-39, and Cys-42.

This sequence belongs to the universal ribosomal protein uS14 family. It depends on Zn(2+) as a cofactor.

The chain is Small ribosomal subunit protein uS14 (rps29A) from Guillardia theta (Cryptophyte).